A 268-amino-acid chain; its full sequence is Cyclohexadienyl dehydratase (268 aa).

Residues 1 to 25 (MPKSFRHLVQALACLALLASASLQA) form the signal peptide.

It belongs to the bacterial solute-binding protein 3 family. As to quaternary structure, homodimer.

The protein localises to the periplasm. The enzyme catalyses prephenate + H(+) = 3-phenylpyruvate + CO2 + H2O. It catalyses the reaction L-arogenate + H(+) = L-phenylalanine + CO2 + H2O. Its pathway is amino-acid biosynthesis; L-phenylalanine biosynthesis; L-phenylalanine from L-arogenate: step 1/1. It participates in amino-acid biosynthesis; L-phenylalanine biosynthesis; phenylpyruvate from prephenate: step 1/1. Functionally, forms alternative pathway for phenylalanine biosynthesis. Can catalyze two reactions: prephenate dehydratase and arogenate dehydratase. May have a role in chemotaxis or transport. This Pseudomonas aeruginosa (strain ATCC 15692 / DSM 22644 / CIP 104116 / JCM 14847 / LMG 12228 / 1C / PRS 101 / PAO1) protein is Cyclohexadienyl dehydratase (pheC).